Consider the following 298-residue polypeptide: MDNAGKEREAVQLMAEAEKRVKASHSFLRGLFGGNTRIEEACEMYTRAANMFKMAKNWSAAGNAFCQAAKLHMQLQSKHDSATSFVDAGNAYKKADPQEAINCLNAAIDIYTDMGRFTIAAKHHITIAEIYETELVDIEKAIAHYEQSADYYKGEESNSSANKCLLKVAAYAAQLEQYQKAIEIYEQVGANTMDNPLLKYSAKDYFFKAALCHFIVDELNAKLALEKYEEMFPAFTDSRECKLLKKLLEAHEEQNSEAYTEAVKEFDSISRLDQWLTTMLLRIKKSIQGDGEGDGDLK.

The protein belongs to the SNAP family. Interacts with PRKCABP, and disrupts the interaction between GRIA2 and PRKCABP, leading to the internalization of GRIA2.

The protein resides in the membrane. Functionally, required for vesicular transport between the endoplasmic reticulum and the Golgi apparatus. This chain is Beta-soluble NSF attachment protein (NAPB), found in Homo sapiens (Human).